Reading from the N-terminus, the 551-residue chain is Glucans biosynthesis protein D (551 aa).

Positions 1–32 (MDRRRFIKGSMAMAAVCGTSGIASLFSQAAFA) form a signal peptide, tat-type signal.

Belongs to the OpgD/OpgG family. Post-translationally, predicted to be exported by the Tat system. The position of the signal peptide cleavage has not been experimentally proven.

It is found in the periplasm. Its pathway is glycan metabolism; osmoregulated periplasmic glucan (OPG) biosynthesis. Probably involved in the control of the structural glucose backbone of osmoregulated periplasmic glucans (OPGs). This chain is Glucans biosynthesis protein D, found in Escherichia coli O139:H28 (strain E24377A / ETEC).